The following is a 428-amino-acid chain: Histidine--tRNA ligase (428 aa).

This sequence belongs to the class-II aminoacyl-tRNA synthetase family. In terms of assembly, homodimer.

Its subcellular location is the cytoplasm. It catalyses the reaction tRNA(His) + L-histidine + ATP = L-histidyl-tRNA(His) + AMP + diphosphate + H(+). This chain is Histidine--tRNA ligase, found in Lactobacillus helveticus (strain DPC 4571).